A 370-amino-acid chain; its full sequence is Pantothenate kinase 3 (370 aa).

Glutamate 138 serves as the catalytic Proton acceptor. The acetyl-CoA site is built by serine 192, serine 195, and arginine 207.

This sequence belongs to the type II pantothenate kinase family. Homodimer. Highly expressed in the liver.

Its subcellular location is the cytoplasm. It catalyses the reaction (R)-pantothenate + ATP = (R)-4'-phosphopantothenate + ADP + H(+). It participates in cofactor biosynthesis; coenzyme A biosynthesis; CoA from (R)-pantothenate: step 1/5. With respect to regulation, subject to allosteric regulation, exists in two distinct conformational states, a catalytically incompetent (or open) conformation stabilized by the binding of acetyl(acyl)-CoA, and a catalytically competent (or closed) conformation stabilized by ATP-binding. Acetyl-CoA and its thioesters act as allosteric inhibitors and compete with the ATP-binding site. Strongly inhibited by acetyl-CoA, malonyl-CoA and palmitoyl CoA and modestly inhibited by CoA. Inhibited by calcium hopantenate. Functionally, catalyzes the phosphorylation of pantothenate to generate 4'-phosphopantothenate in the first and rate-determining step of coenzyme A (CoA) synthesis. The polypeptide is Pantothenate kinase 3 (Pank3) (Mus musculus (Mouse)).